The sequence spans 371 residues: Queuine tRNA-ribosyltransferase (371 aa).

Residue Asp-90 is the Proton acceptor of the active site. Substrate-binding positions include 90-94 (DSGGF), Asp-144, Gln-185, and Gly-212. Residues 243–249 (GVGTPED) are RNA binding. Asp-262 serves as the catalytic Nucleophile. Residues 267–271 (TRNAR) are RNA binding; important for wobble base 34 recognition. Residues Cys-300, Cys-302, Cys-305, and His-331 each coordinate Zn(2+).

This sequence belongs to the queuine tRNA-ribosyltransferase family. As to quaternary structure, homodimer. Within each dimer, one monomer is responsible for RNA recognition and catalysis, while the other monomer binds to the replacement base PreQ1. It depends on Zn(2+) as a cofactor.

It carries out the reaction 7-aminomethyl-7-carbaguanine + guanosine(34) in tRNA = 7-aminomethyl-7-carbaguanosine(34) in tRNA + guanine. It functions in the pathway tRNA modification; tRNA-queuosine biosynthesis. Catalyzes the base-exchange of a guanine (G) residue with the queuine precursor 7-aminomethyl-7-deazaguanine (PreQ1) at position 34 (anticodon wobble position) in tRNAs with GU(N) anticodons (tRNA-Asp, -Asn, -His and -Tyr). Catalysis occurs through a double-displacement mechanism. The nucleophile active site attacks the C1' of nucleotide 34 to detach the guanine base from the RNA, forming a covalent enzyme-RNA intermediate. The proton acceptor active site deprotonates the incoming PreQ1, allowing a nucleophilic attack on the C1' of the ribose to form the product. After dissociation, two additional enzymatic reactions on the tRNA convert PreQ1 to queuine (Q), resulting in the hypermodified nucleoside queuosine (7-(((4,5-cis-dihydroxy-2-cyclopenten-1-yl)amino)methyl)-7-deazaguanosine). The protein is Queuine tRNA-ribosyltransferase of Acidithiobacillus ferrooxidans (strain ATCC 23270 / DSM 14882 / CIP 104768 / NCIMB 8455) (Ferrobacillus ferrooxidans (strain ATCC 23270)).